Here is a 484-residue protein sequence, read N- to C-terminus: MFPNSILGRPPFTPNHQQHNNFFTLSPTVYSHQQLIDAQFNFQNADLSRAVSLQQLTYGNVSPIQTSASPLFRGRKRLSDEKNLPLDGKRQRFHSPHQEPTVVNQIVPLSGERRYSMPPLFHTHYVPDIVRCVPPFREIAFLEPREITLPEAKDKLSQQILELFETCQQQISDLKKKELCRTQLQREIQLLFPQSRLFLVGSSLNGFGTRSSDGDLCLVVKEEPCFFQVNQKTEARHILTLVHKHFCTRLSGYIERPQLIRAKVPIVKFRDKVSCVEFDLNVNNIVGIRNTFLLRTYAYLENRVRPLVLVIKKWASHHQINDASRGTLSSYSLVLMVLHYLQTLPEPILPSLQKIYPESFSPAIQLHLVHQAPCNVPPYLSKNESNLGDLLLGFLKYYATEFDWNSQMISVREAKAIPRPDGIEWRNKYICVEEPFDGTNTARAVHEKQKFDMIKDQFLKSWHRLKNKRDLNSILPVRAAVLKR.

Phosphoserine occurs at positions 62 and 69. Residues 72-97 (FRGRKRLSDEKNLPLDGKRQRFHSPH) form a disordered region. Residues 76–92 (KRLSDEKNLPLDGKRQR) carry the Nuclear localization signal motif. Positions 77–90 (RLSDEKNLPLDGKR) are enriched in basic and acidic residues. Position 95 is a phosphoserine (Ser-95). Positions 213 and 215 each coordinate Mg(2+). The 55-residue stretch at 386-440 (NLGDLLLGFLKYYATEFDWNSQMISVREAKAIPRPDGIEWRNKYICVEEPFDGTN) folds into the PAP-associated domain.

This sequence belongs to the DNA polymerase type-B-like family. GLD2 subfamily. Interacts with CPEB1, CPEB2, CPSF1 and PABPC1. Interacts with QKI isoform QKI7; promoting recruitment to miRNA miR-122 and miR-122 stabilization. Mg(2+) is required as a cofactor. Requires Mn(2+) as cofactor. In terms of tissue distribution, expressed in brain. Within brain, it is expressed in cerebellum, hippocampus and medulla.

It localises to the cytoplasm. Its subcellular location is the nucleus. It catalyses the reaction RNA(n) + ATP = RNA(n)-3'-adenine ribonucleotide + diphosphate. Cytoplasmic poly(A) RNA polymerase that adds successive AMP monomers to the 3'-end of specific RNAs, forming a poly(A) tail. In contrast to the canonical nuclear poly(A) RNA polymerase, it only adds poly(A) to selected cytoplasmic mRNAs. Does not play a role in replication-dependent histone mRNA degradation. Adds a single nucleotide to the 3' end of specific miRNAs, monoadenylation stabilizes and prolongs the activity of some but not all miRNAs. The sequence is that of Poly(A) RNA polymerase GLD2 from Homo sapiens (Human).